The following is a 115-amino-acid chain: UPF0738 protein SACOL1009 (115 aa).

This sequence belongs to the UPF0738 family.

This is UPF0738 protein SACOL1009 from Staphylococcus aureus (strain COL).